Reading from the N-terminus, the 123-residue chain is Large ribosomal subunit protein bL12 (123 aa).

This sequence belongs to the bacterial ribosomal protein bL12 family. Homodimer. Part of the ribosomal stalk of the 50S ribosomal subunit. Forms a multimeric L10(L12)X complex, where L10 forms an elongated spine to which 2 to 4 L12 dimers bind in a sequential fashion. Binds GTP-bound translation factors.

Forms part of the ribosomal stalk which helps the ribosome interact with GTP-bound translation factors. Is thus essential for accurate translation. This Shewanella sp. (strain MR-4) protein is Large ribosomal subunit protein bL12.